A 645-amino-acid polypeptide reads, in one-letter code: 1-deoxy-D-xylulose-5-phosphate synthase 2 (645 aa).

Thiamine diphosphate contacts are provided by residues H79 and 120 to 122 (GHS). A Mg(2+)-binding site is contributed by D151. Thiamine diphosphate-binding positions include 152–153 (GS), N180, Y291, and E373. N180 contacts Mg(2+).

This sequence belongs to the transketolase family. DXPS subfamily. As to quaternary structure, homodimer. The cofactor is Mg(2+). Thiamine diphosphate is required as a cofactor.

It catalyses the reaction D-glyceraldehyde 3-phosphate + pyruvate + H(+) = 1-deoxy-D-xylulose 5-phosphate + CO2. The protein operates within metabolic intermediate biosynthesis; 1-deoxy-D-xylulose 5-phosphate biosynthesis; 1-deoxy-D-xylulose 5-phosphate from D-glyceraldehyde 3-phosphate and pyruvate: step 1/1. Functionally, catalyzes the acyloin condensation reaction between C atoms 2 and 3 of pyruvate and glyceraldehyde 3-phosphate to yield 1-deoxy-D-xylulose-5-phosphate (DXP). The sequence is that of 1-deoxy-D-xylulose-5-phosphate synthase 2 from Rhodospirillum rubrum (strain ATCC 11170 / ATH 1.1.1 / DSM 467 / LMG 4362 / NCIMB 8255 / S1).